We begin with the raw amino-acid sequence, 287 residues long: Urease accessory protein UreD (287 aa).

Belongs to the UreD family. As to quaternary structure, ureD, UreF and UreG form a complex that acts as a GTP-hydrolysis-dependent molecular chaperone, activating the urease apoprotein by helping to assemble the nickel containing metallocenter of UreC. The UreE protein probably delivers the nickel.

It is found in the cytoplasm. Functionally, required for maturation of urease via the functional incorporation of the urease nickel metallocenter. The protein is Urease accessory protein UreD of Aliivibrio fischeri (strain MJ11) (Vibrio fischeri).